Reading from the N-terminus, the 443-residue chain is Thymidine phosphorylase (443 aa).

Belongs to the thymidine/pyrimidine-nucleoside phosphorylase family. Homodimer.

The enzyme catalyses thymidine + phosphate = 2-deoxy-alpha-D-ribose 1-phosphate + thymine. Its pathway is pyrimidine metabolism; dTMP biosynthesis via salvage pathway; dTMP from thymine: step 1/2. Functionally, the enzymes which catalyze the reversible phosphorolysis of pyrimidine nucleosides are involved in the degradation of these compounds and in their utilization as carbon and energy sources, or in the rescue of pyrimidine bases for nucleotide synthesis. This Photobacterium profundum (strain SS9) protein is Thymidine phosphorylase.